A 142-amino-acid polypeptide reads, in one-letter code: Large ribosomal subunit protein bL17 (142 aa).

It belongs to the bacterial ribosomal protein bL17 family. Part of the 50S ribosomal subunit. Contacts protein L32.

The protein is Large ribosomal subunit protein bL17 of Wolbachia pipientis subsp. Culex pipiens (strain wPip).